A 311-amino-acid polypeptide reads, in one-letter code: Coproporphyrin III ferrochelatase 1 (311 aa).

Residues Tyr12, Arg29, 45–46 (RY), Ser53, and Tyr124 contribute to the Fe-coproporphyrin III site. Residues His182 and Glu263 each contribute to the Fe(2+) site.

Belongs to the ferrochelatase family.

It localises to the cytoplasm. The catalysed reaction is Fe-coproporphyrin III + 2 H(+) = coproporphyrin III + Fe(2+). The protein operates within porphyrin-containing compound metabolism; protoheme biosynthesis. Its function is as follows. Involved in coproporphyrin-dependent heme b biosynthesis. Catalyzes the insertion of ferrous iron into coproporphyrin III to form Fe-coproporphyrin III. The sequence is that of Coproporphyrin III ferrochelatase 1 from Bacillus cereus (strain ATCC 14579 / DSM 31 / CCUG 7414 / JCM 2152 / NBRC 15305 / NCIMB 9373 / NCTC 2599 / NRRL B-3711).